We begin with the raw amino-acid sequence, 256 residues long: MASNNDSIKKTLGVVIGLSLVCSIIVSTAAVGLRDKQKANAVLDKQSKIVEVAGIDANGKKVPELFAEYIEPRLVDLETGNFTEGNASTYDQREASKDAERSIALTPEEDVADIRRRANTAVVYLVKDQDEVQKVILPMHGKGLWSMMYAFVAVETDGNTVSAITYYEQGETPGLGGEVENPSWRDQFIGKKLYNEDHQPAIKVVKGGAPQGSEHGVDGLSGATLTSNGVQHTFDFWLGDKGFGPFLAKVRDGELN.

The chain crosses the membrane as a helical span at residues leucine 12–glycine 32. Threonine 224 bears the FMN phosphoryl threonine mark.

It belongs to the NqrC family. As to quaternary structure, composed of six subunits; NqrA, NqrB, NqrC, NqrD, NqrE and NqrF. The cofactor is FMN.

The protein localises to the cell inner membrane. It carries out the reaction a ubiquinone + n Na(+)(in) + NADH + H(+) = a ubiquinol + n Na(+)(out) + NAD(+). This reaction is tightly coupled to the Na(+) pumping activity and specifically requires Na(+) for activity. Inhibited by korormicin and 2-N-heptyl-4-hydroxyquinoline N-oxide (HQNO). Its function is as follows. NQR complex catalyzes the reduction of ubiquinone-1 to ubiquinol by two successive reactions, coupled with the transport of Na(+) ions from the cytoplasm to the periplasm. NqrA to NqrE are probably involved in the second step, the conversion of ubisemiquinone to ubiquinol. This chain is Na(+)-translocating NADH-quinone reductase subunit C, found in Vibrio alginolyticus.